The primary structure comprises 315 residues: MIEIEKPKVDIVELSEDYRYGKFVIEPLERGYGITIGNALRRILLSSLPGVAVNAIKIDGVLHEFSTIPGVKEDVTEIILTLKELSATIDGEGSRTLKIEAQGPCSITGADIICPPDVEILSKDLAIATLDDNAKLNMEIFVDKGRGYVSAEENKTENVPIGVLPVDSIYTPVEKVSYHVENTRVGQKTDYDKLVLEVWTNGSINPQEGISLAAKVLVEHLNLFIDLTEHVSSVEIMVEKEEDQKEKVLEMTIEELDLSVRSYNCLKRAGINTVEELANKSEDDMMKVRNLGKKSLEEVIQKLEELGLGLKPSEE.

The interval 1–228 is alpha N-terminal domain (alpha-NTD); sequence MIEIEKPKVD…EHLNLFIDLT (228 aa). Positions 245–315 are alpha C-terminal domain (alpha-CTD); the sequence is KEKVLEMTIE…LGLGLKPSEE (71 aa).

It belongs to the RNA polymerase alpha chain family. Homodimer. The RNAP catalytic core consists of 2 alpha, 1 beta, 1 beta' and 1 omega subunit. When a sigma factor is associated with the core the holoenzyme is formed, which can initiate transcription.

The catalysed reaction is RNA(n) + a ribonucleoside 5'-triphosphate = RNA(n+1) + diphosphate. Functionally, DNA-dependent RNA polymerase catalyzes the transcription of DNA into RNA using the four ribonucleoside triphosphates as substrates. The polypeptide is DNA-directed RNA polymerase subunit alpha (Clostridioides difficile (strain 630) (Peptoclostridium difficile)).